A 226-amino-acid polypeptide reads, in one-letter code: Agamous-like MADS-box protein AGL23 (226 aa).

The MADS-box domain occupies 6 to 66 (LGRRKVEIVK…GKVFSFGHPN (61 aa)). A coiled-coil region spans residues 95-132 (VQMLNKSYTEVKAEVEKEQKNKQSRAQNERENENAEEW). The span at 108-127 (EVEKEQKNKQSRAQNERENE) shows a compositional bias: basic and acidic residues. A disordered region spans residues 108–131 (EVEKEQKNKQSRAQNERENENAEE).

Its subcellular location is the nucleus. Probable transcription factor that controls female gametophyte (megagametogenesis) development and chloroplast biogenesis during embryo development. The sequence is that of Agamous-like MADS-box protein AGL23 from Arabidopsis thaliana (Mouse-ear cress).